The sequence spans 179 residues: Large ribosomal subunit protein uL5 (179 aa).

It belongs to the universal ribosomal protein uL5 family. As to quaternary structure, part of the 50S ribosomal subunit; part of the 5S rRNA/L5/L18/L25 subcomplex. Contacts the 5S rRNA and the P site tRNA. Forms a bridge to the 30S subunit in the 70S ribosome.

This is one of the proteins that bind and probably mediate the attachment of the 5S RNA into the large ribosomal subunit, where it forms part of the central protuberance. In the 70S ribosome it contacts protein S13 of the 30S subunit (bridge B1b), connecting the 2 subunits; this bridge is implicated in subunit movement. Contacts the P site tRNA; the 5S rRNA and some of its associated proteins might help stabilize positioning of ribosome-bound tRNAs. The chain is Large ribosomal subunit protein uL5 from Francisella philomiragia subsp. philomiragia (strain ATCC 25017 / CCUG 19701 / FSC 153 / O#319-036).